Reading from the N-terminus, the 57-residue chain is Large ribosomal subunit protein bL33 (57 aa).

This sequence belongs to the bacterial ribosomal protein bL33 family.

The protein is Large ribosomal subunit protein bL33 of Shewanella pealeana (strain ATCC 700345 / ANG-SQ1).